We begin with the raw amino-acid sequence, 79 residues long: Panulirin (79 aa).

Residues 1-22 (MKNKAVLMLMALFLVAVTQVHG) form the signal peptide. Positions 23–26 (DPEP) are excised as a propeptide. Intrachain disulfides connect C33-C63, C40-C56, and C46-C64. A propeptide spanning residues 75–79 (QLLAA) is cleaved from the precursor.

In terms of assembly, monomer. Contains 3 disulfide bonds. Expressed in hemocytes (at protein level).

Its function is as follows. Involved in the melanization cascade in response to lipopolysaccharide (LPS). In vitro, reversibly and competitively inhibits trypsin (Ki=8.6 nM) but not serine proteases chymotrypsin, elastase, subtilisin, thrombin and plasmin, cysteine peptidase papain or metallopeptidase carboxypeptidase A. This Panulirus argus (Caribbean spiny lobster) protein is Panulirin.